Consider the following 333-residue polypeptide: Arylacetonitrilase (333 aa).

Residues 9 to 284 (VRVAVTQAEP…EGIIYADLEM (276 aa)) enclose the CN hydrolase domain. Glutamate 49 acts as the Proton acceptor in catalysis. Lysine 129 is a catalytic residue. Cysteine 164 serves as the catalytic Nucleophile.

The protein belongs to the carbon-nitrogen hydrolase superfamily. Nitrilase family.

It catalyses the reaction a nitrile + 2 H2O = a carboxylate + NH4(+). The enzyme catalyses 4-chlorophenylacetonitrile + 2 H2O = 4-chlorophenylacetate + NH4(+). Its function is as follows. Nitrilase that hydrolyzes preferentially phenylacetonitrile, (R,S)-mandelonitrile, and 3-indolylacetonitrile. This chain is Arylacetonitrilase, found in Aspergillus oryzae (strain ATCC 42149 / RIB 40) (Yellow koji mold).